Consider the following 521-residue polypeptide: Bacillolysin (521 aa).

The N-terminal stretch at 1 to 27 (MGLGKKLSVAVAASFMSLSISLPGVQA) is a signal peptide. A propeptide spans 28 to 221 (AEGHQLKENQ…ILKQQNKVEH (194 aa)) (activation peptide). Ca(2+) is bound at residue aspartate 360. A Zn(2+)-binding site is contributed by histidine 364. Residue glutamate 365 is part of the active site. 2 residues coordinate Zn(2+): histidine 368 and glutamate 388. 4 residues coordinate Ca(2+): aspartate 399, aspartate 402, aspartate 404, and glutamate 407. The active-site Proton donor is histidine 449.

This sequence belongs to the peptidase M4 family. Ca(2+) is required as a cofactor. Requires Zn(2+) as cofactor.

The protein localises to the secreted. The catalysed reaction is Similar, but not identical, to that of thermolysin.. Functionally, extracellular zinc metalloprotease. The protein is Bacillolysin (nprE) of Bacillus subtilis subsp. amylosacchariticus.